The chain runs to 252 residues: 3-dehydroquinate dehydratase (252 aa).

3-dehydroquinate contacts are provided by residues 46-48 (EWR) and Arg-82. His-143 acts as the Proton donor/acceptor in catalysis. The active-site Schiff-base intermediate with substrate is Lys-170. 3-dehydroquinate contacts are provided by Arg-212, Ser-231, and Gln-235.

The protein belongs to the type-I 3-dehydroquinase family. Homodimer.

The enzyme catalyses 3-dehydroquinate = 3-dehydroshikimate + H2O. The protein operates within metabolic intermediate biosynthesis; chorismate biosynthesis; chorismate from D-erythrose 4-phosphate and phosphoenolpyruvate: step 3/7. Its function is as follows. Involved in the third step of the chorismate pathway, which leads to the biosynthesis of aromatic amino acids. Catalyzes the cis-dehydration of 3-dehydroquinate (DHQ) and introduces the first double bond of the aromatic ring to yield 3-dehydroshikimate. This chain is 3-dehydroquinate dehydratase, found in Listeria monocytogenes serotype 4a (strain HCC23).